Here is a 75-residue protein sequence, read N- to C-terminus: Large ribosomal subunit protein bL31 (75 aa).

It belongs to the bacterial ribosomal protein bL31 family. Type A subfamily. In terms of assembly, part of the 50S ribosomal subunit.

Its function is as follows. Binds the 23S rRNA. The protein is Large ribosomal subunit protein bL31 of Sphingopyxis alaskensis (strain DSM 13593 / LMG 18877 / RB2256) (Sphingomonas alaskensis).